We begin with the raw amino-acid sequence, 147 residues long: Small ribosomal subunit protein bS16m (147 aa).

This sequence belongs to the bacterial ribosomal protein bS16 family. Component of the mitochondrial ribosome small subunit (28S) which comprises a 12S rRNA and about 30 distinct proteins.

It localises to the mitochondrion. The sequence is that of Small ribosomal subunit protein bS16m (mrps-16) from Caenorhabditis elegans.